The primary structure comprises 120 residues: Lysozyme (120 aa).

The 120-residue stretch at 1 to 120 (KRFTRCGLVN…NHSNPDISSC (120 aa)) folds into the C-type lysozyme domain. 4 cysteine pairs are disulfide-bonded: Cys6/Cys120, Cys27/Cys110, Cys62/Cys76, and Cys72/Cys90. Active-site residues include Glu32 and Asp50.

It belongs to the glycosyl hydrolase 22 family. In terms of assembly, monomer.

The catalysed reaction is Hydrolysis of (1-&gt;4)-beta-linkages between N-acetylmuramic acid and N-acetyl-D-glucosamine residues in a peptidoglycan and between N-acetyl-D-glucosamine residues in chitodextrins.. In terms of biological role, lysozymes have primarily a bacteriolytic function; those in tissues and body fluids are associated with the monocyte-macrophage system and enhance the activity of immunoagents. This is Lysozyme from Antheraea mylitta (Tasar silkworm).